The sequence spans 367 residues: Glutamate 5-kinase (367 aa).

An ATP-binding site is contributed by K8. Substrate-binding residues include S49, D136, and N148. ATP contacts are provided by residues 168-169 and 210-216; these read TD and TGGMATK. The region spanning 275–353 is the PUA domain; that stretch reads TGKLYLDRGA…EEIPTILGYS (79 aa).

This sequence belongs to the glutamate 5-kinase family.

It localises to the cytoplasm. It carries out the reaction L-glutamate + ATP = L-glutamyl 5-phosphate + ADP. It functions in the pathway amino-acid biosynthesis; L-proline biosynthesis; L-glutamate 5-semialdehyde from L-glutamate: step 1/2. Its function is as follows. Catalyzes the transfer of a phosphate group to glutamate to form L-glutamate 5-phosphate. In Cyanothece sp. (strain PCC 7425 / ATCC 29141), this protein is Glutamate 5-kinase.